The primary structure comprises 512 residues: ATP synthase subunit alpha (512 aa).

Residue 169–176 (GDRQTGKT) participates in ATP binding.

This sequence belongs to the ATPase alpha/beta chains family. As to quaternary structure, F-type ATPases have 2 components, CF(1) - the catalytic core - and CF(0) - the membrane proton channel. CF(1) has five subunits: alpha(3), beta(3), gamma(1), delta(1), epsilon(1). CF(0) has three main subunits: a(1), b(2) and c(9-12). The alpha and beta chains form an alternating ring which encloses part of the gamma chain. CF(1) is attached to CF(0) by a central stalk formed by the gamma and epsilon chains, while a peripheral stalk is formed by the delta and b chains.

It is found in the cell membrane. The catalysed reaction is ATP + H2O + 4 H(+)(in) = ADP + phosphate + 5 H(+)(out). Its function is as follows. Produces ATP from ADP in the presence of a proton gradient across the membrane. The alpha chain is a regulatory subunit. The sequence is that of ATP synthase subunit alpha from Elusimicrobium minutum (strain Pei191).